The primary structure comprises 179 residues: Ribosome-recycling factor (179 aa).

The protein belongs to the RRF family.

It is found in the cytoplasm. Its function is as follows. Responsible for the release of ribosomes from messenger RNA at the termination of protein biosynthesis. May increase the efficiency of translation by recycling ribosomes from one round of translation to another. This Chlamydia muridarum (strain MoPn / Nigg) protein is Ribosome-recycling factor.